Here is a 444-residue protein sequence, read N- to C-terminus: C4-dicarboxylate transport protein (444 aa).

8 helical membrane-spanning segments follow: residues 7-29 (LYKSLYFQVIVAIAIGILLGHFY), 44-66 (IKLIKMVIAPIIFCTVVSGIAGM), 79-101 (ALLYFEIVSTIALLIGLVVVNVV), 143-165 (IVGAFANGDILQVLMFSVIFGFA), 186-208 (VMFNIINMIMKLAPIGALGAMAF), 221-243 (LGQLMICFYITCVLFVLVVLGAI), 291-313 (VVGLVIPTGYSFNLDGTSIYLTM), and 353-375 (FIVLAATLSAVGHLPVAGLALIL). A disordered region spans residues 418–444 (SGGRAISDTREEDDLGVAEGPTPTTVK).

The protein belongs to the dicarboxylate/amino acid:cation symporter (DAACS) (TC 2.A.23) family.

The protein localises to the cell inner membrane. Responsible for the transport of dicarboxylates such as succinate, fumarate, and malate from the periplasm across the inner membrane. The sequence is that of C4-dicarboxylate transport protein from Pseudomonas chlororaphis (Pseudomonas aureofaciens).